The chain runs to 268 residues: MGLPEVNFLRKNCILVELKLFYQTVYPPKELYWNNRITAELSTFSNIKYARPTFAVNNGTFQRTRPKLDLVLASSDIRKLATVLFNLKALIMNTKGEEPTLTTMTSVQTNEEKNDNLEQKYSSLLDRWNGKVEVHDSPFLQLQRDSNLLFAERPVRYVSTTEGEGVDISSEEFFRLEEEQCRRNYDVLVDEHSTPSVGMKDGQYGPNIIHFEPSLYHTYSSLPMSMKFWLNGLEDDETTMMNIDEKSAENLDILLHGFKGFSNKRVKG.

To baculovirus occlusion-derived virus envelope protein E27 (ODV-E27).

Its subcellular location is the mitochondrion. Involved in splicing of intron aI5-beta of the mitochondrial COX1 transcript. The chain is Protein MSS18 (MSS18) from Saccharomyces cerevisiae (strain ATCC 204508 / S288c) (Baker's yeast).